The chain runs to 284 residues: RNase adapter protein RapZ (284 aa).

ATP is bound at residue 8–15 (GRSGSGKS). 56 to 59 (DVRN) is a binding site for GTP. Residues 266 to 284 (RSRGKNVQSRHRTLEKRKT) form an RNA-binding region.

This sequence belongs to the RapZ-like family. RapZ subfamily. As to quaternary structure, homotrimer.

Modulates the synthesis of GlmS, by affecting the processing and stability of the regulatory small RNA GlmZ. When glucosamine-6-phosphate (GlcN6P) concentrations are high in the cell, RapZ binds GlmZ and targets it to cleavage by RNase E. Consequently, GlmZ is inactivated and unable to activate GlmS synthesis. Under low GlcN6P concentrations, RapZ is sequestered and inactivated by an other regulatory small RNA, GlmY, preventing GlmZ degradation and leading to synthesis of GlmS. The sequence is that of RNase adapter protein RapZ from Salmonella typhi.